Here is a 178-residue protein sequence, read N- to C-terminus: Platelet inhibitor triplatin-2 (178 aa).

The signal sequence occupies residues 1 to 18 (MKMIISLTFLGILMLAFA). 3 cysteine pairs are disulfide-bonded: cysteine 25–cysteine 134, cysteine 60–cysteine 178, and cysteine 90–cysteine 106.

The protein belongs to the calycin superfamily. Triabin family. Expressed in salivary glands.

The protein resides in the secreted. Functionally, inhibits platelet aggregation and vasoconstriction through binding to distinct eicosanoids involved in inflammation (acts as a scavenger), and has a role in inhibiting host innate immunity by impairing platelet-assisted formation of neutrophil extracellular traps (NETs). Inhibits platelet aggregation by collagen, and low doses of thromboxane A2 mimetic (TXA2 mimetic), and arachidonic acid (AA) without affecting aggregation induced by ADP, convulxin (GP6 agonist), and PMA. Binds to TXA2, TXB2, prostaglandine H2 mimetic (PGH2 mimetic), PGJ2, and PGF2alpha. Binding is not observed to leukotrienes, AA, and biogenic amines (PGE1, 5(S)-HETE, 12(S)-HETE, 20-HETE, norepinephrine, epinephrine, serotonin, LTC4 and ADP). Induces relaxation of aorta rat previously contracted with TXA2 mimetic. Moreover, it also impairs platelet-assisted formation of neutrophil extracellular traps (NETs). NETs are web-like structures of DNA and proteins that play an important role in killing of pathogens. In addition, NETs are implicated in thrombus formation. In vivo, this protein exhibits antithrombotic activity in two distinct mice models that are highly dependent on platelets. It is noteworthy that it inhibits thrombosis without promoting excessive bleeding. In Triatoma infestans (Assassin bug), this protein is Platelet inhibitor triplatin-2.